A 241-amino-acid chain; its full sequence is Queuine tRNA-ribosyltransferase-like protein (241 aa).

This sequence belongs to the queuine tRNA-ribosyltransferase family.

This chain is Queuine tRNA-ribosyltransferase-like protein, found in Plasmodium falciparum.